Consider the following 463-residue polypeptide: Proton-coupled folate transporter (463 aa).

At 1-27 (MVSPDDSPEIRDRPRPRRCLLPASVTV) the chain is on the cytoplasmic side. Residues 28–46 (EPVIFLSMFALALQGPLAT) form a helical membrane-spanning segment. The Extracellular segment spans residues 47–86 (QYLWDRLSADIGFNGTRTVGCAMNGSKSAGPEQQEVETLT). N-linked (GlcNAc...) asparagine glycosylation is found at asparagine 60 and asparagine 70. A disulfide bond links cysteine 67 and cysteine 302. A helical transmembrane segment spans residues 87 to 112 (AHWSLYINLGGFLVGLFSVMLLGPWS). The Cytoplasmic portion of the chain corresponds to 113-116 (DKVG). Residues 117–139 (RRPVLMLPCIGLALQAAVYLLVM) form a helical membrane-spanning segment. At 140–144 (YQELH) the chain is on the extracellular side. Residues 145 to 158 (VGYFLIGRFISGIS) traverse the membrane as a helical segment. Residues 159-181 (GDFNMILAGCFAYIADVSDRQSR) lie on the Cytoplasmic side of the membrane. Positions 160 and 189 each coordinate H(+). A helical transmembrane segment spans residues 182–207 (TFRVAVLEACLGIAGMVASIIGGHWR). Residues 208–212 (KAQGY) lie on the Extracellular side of the membrane. Residues 213–231 (INPFWLVFAVNLFTALYVY) traverse the membrane as a helical segment. Topologically, residues 232–270 (FCVEESVKDKKPARLFTHRHYQSFFRLFTVQGENNRRRK) are cytoplasmic. Residues 271–293 (LFLYSLALLVVVTVHMGAKNLFV) form a helical membrane-spanning segment. Histidine 285 contributes to the H(+) binding site. Residues 294–306 (LYELSYPLCWDSD) are Extracellular-facing. A helical transmembrane segment spans residues 307–329 (LIGYGSAAEHLTYLSSLAGLRLF). Residues 330-335 (QLCLAD) are Cytoplasmic-facing. A helical transmembrane segment spans residues 336-355 (SWVAEMGFISNISGLVVISL). Residues 356 to 359 (ASTT) are Extracellular-facing. A helical membrane pass occupies residues 360–380 (PIMFTGYGLRFFAMATTPVIR). The Cytoplasmic portion of the chain corresponds to 381 to 392 (SKLSKMVEEGEQ). A helical membrane pass occupies residues 393 to 418 (GALFSSVACVEGLSFLLATGLFNSLY). At 419 to 426 (PATLHFMK) the chain is on the extracellular side. The helical transmembrane segment at 427–445 (GFPFLLGALLLLIPAGIIG) threads the bilayer. Topologically, residues 446–463 (LIEVCEQKPMYSQFSEIS) are cytoplasmic.

The protein belongs to the major facilitator superfamily. SLC46A family. Monomer.

Its subcellular location is the cell membrane. The protein localises to the apical cell membrane. The protein resides in the basolateral cell membrane. It localises to the endosome membrane. It is found in the cytoplasm. The enzyme catalyses folate(in) + H(+)(in) = folate(out) + H(+)(out). It carries out the reaction (6S)-5-methyl-5,6,7,8-tetrahydrofolate(in) + H(+)(in) = (6S)-5-methyl-5,6,7,8-tetrahydrofolate(out) + H(+)(out). The catalysed reaction is methotrexate(in) + H(+)(in) = methotrexate(out) + H(+)(out). It catalyses the reaction pemetrexed(in) + H(+)(in) = pemetrexed(out) + H(+)(out). Functionally, proton-coupled folate symporter that mediates folate absorption using an H(+) gradient as a driving force. Involved in the intestinal absorption of folates at the brush-border membrane of the proximal jejunum, and the transport from blood to cerebrospinal fluid across the choroid plexus. Functions at acidic pH via alternate outward- and inward-open conformation states. Protonation of residues in the outward open state primes the protein for transport. Binding of folate promotes breaking of salt bridge network and subsequent closure of the extracellular gate, leading to the inward-open state and release of protons and folate. Also able to transport antifolate drugs, such as methotrexate and pemetrexed. Also acts as a lower-affinity, pH-independent heme carrier protein and constitutes the main importer of heme in the intestine. Imports heme in the retina and retinal pigment epithelium, in neurons of the hippocampus, in hepatocytes and in the renal epithelial cells. The protein is Proton-coupled folate transporter of Xenopus laevis (African clawed frog).